The sequence spans 97 residues: Acylphosphatase (97 aa).

The 95-residue stretch at 3–97 folds into the Acylphosphatase-like domain; it reads KVKMIVSGRV…PDFTDFNIKY (95 aa). Catalysis depends on residues Arg-18 and Asn-36.

It belongs to the acylphosphatase family.

It carries out the reaction an acyl phosphate + H2O = a carboxylate + phosphate + H(+). The protein is Acylphosphatase (acyP) of Lactococcus lactis subsp. lactis (strain IL1403) (Streptococcus lactis).